The following is a 364-amino-acid chain: DNA replication and repair protein RecF (364 aa).

30-37 (GNNGQGKT) provides a ligand contact to ATP.

This sequence belongs to the RecF family.

It localises to the cytoplasm. Its function is as follows. The RecF protein is involved in DNA metabolism; it is required for DNA replication and normal SOS inducibility. RecF binds preferentially to single-stranded, linear DNA. It also seems to bind ATP. The chain is DNA replication and repair protein RecF from Citrifermentans bemidjiense (strain ATCC BAA-1014 / DSM 16622 / JCM 12645 / Bem) (Geobacter bemidjiensis).